Reading from the N-terminus, the 434-residue chain is MDKLIIVGGVPLNGSIRISGAKNAVLPILAATLLIEEPVILSNIPHLNDVTTMIELLGRMGAQITIDERMSIEVDCSQIQNVHASYELVKTMRASILVLGPLLSRFGKAEVSLPGGCAIGSRPVDVHIDGMRALGADIELVDGFIHATVEGRLKGAELNLGKITVTGTENLIMAATLAEGQTIIHNAACEPEVQDLANFLNKMGARISGAGTDTIVIDGVDRLSGGSYSILPDRIEAGTYLVAAAMTRGHVRIRDVFPKTLGAVLEKLHEAGARVKIGENWVDLDMQGRRAKAVDIVTAPYPEMPTDMQAQFMALNVVAEGQAVITETVFENRFMHVHELQRMGADIKLQGSKALIRGKEKLTGAPVMATDLRASAGLVLAGLMARGNTIVDRIYHIDRGYECIEEKLAQLGAEIRRVSSHVYAARYAAQKRWL.

Residue 22-23 (KN) participates in phosphoenolpyruvate binding. Arg93 provides a ligand contact to UDP-N-acetyl-alpha-D-glucosamine. Residue Cys117 is the Proton donor of the active site. Position 117 is a 2-(S-cysteinyl)pyruvic acid O-phosphothioketal (Cys117). 2 residues coordinate UDP-N-acetyl-alpha-D-glucosamine: Asp307 and Val329.

It belongs to the EPSP synthase family. MurA subfamily.

The protein localises to the cytoplasm. It carries out the reaction phosphoenolpyruvate + UDP-N-acetyl-alpha-D-glucosamine = UDP-N-acetyl-3-O-(1-carboxyvinyl)-alpha-D-glucosamine + phosphate. It functions in the pathway cell wall biogenesis; peptidoglycan biosynthesis. Functionally, cell wall formation. Adds enolpyruvyl to UDP-N-acetylglucosamine. The polypeptide is UDP-N-acetylglucosamine 1-carboxyvinyltransferase (Coxiella burnetii (strain CbuG_Q212) (Coxiella burnetii (strain Q212))).